Here is a 29-residue protein sequence, read N- to C-terminus: Cytochrome b6-f complex subunit 8 (29 aa).

Residues 3–23 traverse the membrane as a helical segment; it reads TVSIAWAALMVIFTFSISLVV.

It belongs to the PetN family. In terms of assembly, the 4 large subunits of the cytochrome b6-f complex are cytochrome b6, subunit IV (17 kDa polypeptide, PetD), cytochrome f and the Rieske protein, while the 4 small subunits are PetG, PetL, PetM and PetN. The complex functions as a dimer.

The protein resides in the plastid. It localises to the chloroplast thylakoid membrane. Component of the cytochrome b6-f complex, which mediates electron transfer between photosystem II (PSII) and photosystem I (PSI), cyclic electron flow around PSI, and state transitions. The sequence is that of Cytochrome b6-f complex subunit 8 from Psilotum nudum (Whisk fern).